The following is a 239-amino-acid chain: UDP-2,3-diacylglucosamine hydrolase (239 aa).

The Mn(2+) site is built by aspartate 8, histidine 10, aspartate 41, asparagine 78, and histidine 113. 78–79 (NR) contacts substrate. Positions 121, 159, 163, 166, and 194 each coordinate substrate. Positions 194 and 196 each coordinate Mn(2+).

Belongs to the LpxH family. The cofactor is Mn(2+).

The protein resides in the cell inner membrane. It carries out the reaction UDP-2-N,3-O-bis[(3R)-3-hydroxytetradecanoyl]-alpha-D-glucosamine + H2O = 2-N,3-O-bis[(3R)-3-hydroxytetradecanoyl]-alpha-D-glucosaminyl 1-phosphate + UMP + 2 H(+). The protein operates within glycolipid biosynthesis; lipid IV(A) biosynthesis; lipid IV(A) from (3R)-3-hydroxytetradecanoyl-[acyl-carrier-protein] and UDP-N-acetyl-alpha-D-glucosamine: step 4/6. Hydrolyzes the pyrophosphate bond of UDP-2,3-diacylglucosamine to yield 2,3-diacylglucosamine 1-phosphate (lipid X) and UMP by catalyzing the attack of water at the alpha-P atom. Involved in the biosynthesis of lipid A, a phosphorylated glycolipid that anchors the lipopolysaccharide to the outer membrane of the cell. This chain is UDP-2,3-diacylglucosamine hydrolase, found in Shewanella oneidensis (strain ATCC 700550 / JCM 31522 / CIP 106686 / LMG 19005 / NCIMB 14063 / MR-1).